A 92-amino-acid polypeptide reads, in one-letter code: Small ribosomal subunit protein uS19 (92 aa).

This sequence belongs to the universal ribosomal protein uS19 family.

Its function is as follows. Protein S19 forms a complex with S13 that binds strongly to the 16S ribosomal RNA. This chain is Small ribosomal subunit protein uS19, found in Rickettsia canadensis (strain McKiel).